Here is a 113-residue protein sequence, read N- to C-terminus: U11-theraphotoxin-Hhn1a (113 aa).

Residues 1-21 form the signal peptide; the sequence is MNTVRVTFLLVFVLAVSLGQA. The propeptide occupies 22–74; that stretch reads DKDENRMEMQEKTEQGKSYLDFAENLLLQKLEELEAKLPEEDSEESRNSRQKR. The span at 58 to 69 shows a compositional bias: basic and acidic residues; sequence KLPEEDSEESRN. The segment at 58 to 82 is disordered; the sequence is KLPEEDSEESRNSRQKRCIGEGVPC. Disulfide bonds link C75–C90, C82–C95, and C89–C110.

The protein belongs to the neurotoxin 14 (magi-1) family. 01 (HNTX-16) subfamily. Expressed by the venom gland.

It is found in the secreted. Its function is as follows. Probable ion channel inhibitor. The polypeptide is U11-theraphotoxin-Hhn1a (Cyriopagopus hainanus (Chinese bird spider)).